A 433-amino-acid polypeptide reads, in one-letter code: AP-2 complex subunit mu (433 aa).

The MHD domain maps to 168–432; that stretch reads RNELFLDVLE…IGRSGIYETR (265 aa). A 1,2-diacyl-sn-glycero-3-phospho-(1D-myo-inositol-3,4,5-trisphosphate)-binding residues include K339, K343, and K352.

Belongs to the adaptor complexes medium subunit family. As to quaternary structure, adaptor protein complex 2 (AP-2) is a heterotetramer composed of two large adaptins (alpha-type subunit and beta-type subunit), a medium adaptin (mu-type subunit) and a small adaptin (sigma-type subunit).

It is found in the cell membrane. The protein resides in the membrane. The protein localises to the coated pit. Its function is as follows. Component of the adaptor complexes which link clathrin to receptors in coated vesicles. Clathrin-associated protein complexes are believed to interact with the cytoplasmic tails of membrane proteins, leading to their selection and concentration. AP50 is a subunit of the plasma membrane adaptor. The complex binds polyphosphoinositide-containing lipids. This is AP-2 complex subunit mu (AP2M1) from Gallus gallus (Chicken).